The primary structure comprises 1239 residues: Anillin (1239 aa).

4 disordered regions span residues 32 to 67 (CSVPSSSATSASGGDAGVLAPRSRSPGGQSAASGGG), 230 to 265 (EAPPPKPHLSSRRAEKGPAPLPPKKDEVDEASRTKQ), 493 to 621 (FDNQ…MCNG), and 684 to 716 (GSTQDDQSDSGDEQNASRLSLGSKGTTASNSFS). Positions 53-63 (RSRSPGGQSAA) are enriched in low complexity. Residues 126 to 371 (EQAEGGALNP…ENKGTGGQSQ (246 aa)) are interaction with and bundling of F-actin. Residues 252–265 (PKKDEVDEASRTKQ) are compositionally biased toward basic and acidic residues. Positions 500 to 518 (SSVAAQARPPAPAPSRVVR) are enriched in low complexity. Positions 519-528 (PMPPPPPPPI) are enriched in pro residues. Residues 551-563 (EDSKRARKSHSDR) are compositionally biased toward basic and acidic residues. The span at 594 to 610 (DEEETESCMDESDDQSQ) shows a compositional bias: acidic residues. Positions 699–716 (ASRLSLGSKGTTASNSFS) are enriched in polar residues. Ser712 bears the Phosphoserine mark. Thr740 carries the phosphothreonine modification. A phosphoserine mark is found at Ser744 and Ser754. Position 831 is a phosphothreonine (Thr831). Positions 834–861 (DDEEMQNAREVNDASQAQDKIKKLLSEV) form a coiled coil. In terms of domain architecture, PH spans 1106–1230 (SVEYKGFLTM…WCAYLNKALT (125 aa)).

In terms of assembly, interacts with and bundles F-actin. In terms of tissue distribution, accumulates in the ring canals that interconnect cells of the germline cysts in males and the ovarian follicles in females. These structures develop from arrested contractile rings after a specialized cytokinesis in which the closing of the invaginating plasma membrane is incomplete. Also concentrates in the arrested cleavage furrows that initially link the oocyte to its 15 nurse cells in the early egg chamber and is subsequently lost from these furrows as germline cell division is completed.

It is found in the nucleus. It localises to the cytoplasm. Its subcellular location is the cytoskeleton. The protein localises to the cell cortex. The protein resides in the cell projection. It is found in the cilium. It localises to the flagellum. In terms of biological role, required for cytokinesis. Essential for the structural integrity of the cleavage furrow and for completion of cleavage furrow ingression and proper formation of the midbody. Required during cellularization of syncytial embryos for the proper formation and function of the furrow canals, the stable inward folds of the plasma membrane which separate the peripheral nuclei. Also required for the formation of the pole cells, the progenitors of the adult germline which are formed by cytokinesis of the cytoplasmic buds at the posterior pole of the syncytial embryo. Essential for embryonic viability. In Drosophila melanogaster (Fruit fly), this protein is Anillin (scra).